Here is a 103-residue protein sequence, read N- to C-terminus: Large ribosomal subunit protein uL24 (103 aa).

This sequence belongs to the universal ribosomal protein uL24 family. In terms of assembly, part of the 50S ribosomal subunit.

In terms of biological role, one of two assembly initiator proteins, it binds directly to the 5'-end of the 23S rRNA, where it nucleates assembly of the 50S subunit. Functionally, one of the proteins that surrounds the polypeptide exit tunnel on the outside of the subunit. The protein is Large ribosomal subunit protein uL24 of Ruthia magnifica subsp. Calyptogena magnifica.